The primary structure comprises 498 residues: MASQGTKRSYEQMETGGERQDATEIRASVGRMIGGIGRFYIQMCTELKLSDYEGRLIQNSITIERMVLSAFDERRNKYLEEHPSAGKDPKKTGGPIYKRIDGKWMRELILYDKEEIRRVWRQANNGEDATAGLTHIMIWHSNLNDATYQRTRALVRTGMDPRMCSLMQGSTLPRRSGAAGAAVKGVGTIAMELIGMIKRGINDRNFWRGENGRRTRIAYERMCNILKGKFQTAAQRAMMDQVRESRNPGNAEIEDLIFLARSALILRGSVAHKSCLPACVYGLAVASGHDFEREGYSLVGIDPFKLLQNSQVFSLIRPNENPAHKSQLVWMACHSAAFEDLRVSGFIRGKKVVPRGRLSTRGVQIASNENVEAMDSSTLELRSRYWAIRTRSGGNTNQQKASADQISVQPTFSVQRNLPFERATVMAAFIGDNEGRTSDMRTEIIRMMESAKPEDLSFQGRGVFELSDEKATNPIVPSFDMNNEGSYFFGDNAEEYDN.

A Unconventional nuclear localization signal motif is present at residues 1 to 18 (MASQGTKRSYEQMETGGE). The disordered stretch occupies residues 1–22 (MASQGTKRSYEQMETGGERQDA). Residues 8–22 (RSYEQMETGGERQDA) are compositionally biased toward basic and acidic residues. The short motif at 198 to 216 (KRGINDRNFWRGENGRRTR) is the Bipartite nuclear localization signal element.

Belongs to the influenza viruses nucleoprotein family. Homomultimerizes to form the nucleocapsid. May bind host exportin-1/XPO1. Binds to viral genomic RNA. Protein-RNA contacts are mediated by a combination of electrostatic interactions between positively charged residues and the phosphate backbone and planar interactions between aromatic side chains and bases. Post-translationally, late in virus-infected cells, may be cleaved from a 56-kDa protein to a 53-kDa protein by a cellular caspase. This cleavage might be a marker for the onset of apoptosis in infected cells or have a specific function in virus host interaction.

The protein resides in the virion. It localises to the host nucleus. Its function is as follows. Encapsidates the negative strand viral RNA, protecting it from nucleases. The encapsidated genomic RNA is termed the ribonucleoprotein (RNP) and serves as template for transcription and replication. The RNP needs to be localized in the host nucleus to start an infectious cycle, but is too large to diffuse through the nuclear pore complex. NP comprises at least 2 nuclear localization signals that are responsible for the active RNP import into the nucleus through cellular importin alpha/beta pathway. Later in the infection, nclear export of RNPs are mediated through viral proteins NEP interacting with M1 which binds nucleoproteins. It is possible that nucleoprotein binds directly host exportin-1/XPO1 and plays an active role in RNPs nuclear export. M1 interaction with RNP seems to hide nucleoprotein's nuclear localization signals. Soon after a virion infects a new cell, M1 dissociates from the RNP under acidification of the virion driven by M2 protein. Dissociation of M1 from RNP unmasks nucleoprotein's nuclear localization signals, targeting the RNP to the nucleus. The protein is Nucleoprotein of Influenza A virus (strain A/New Jersey/8/1976 H1N1).